The following is a 526-amino-acid chain: Peptide chain release factor 3 (526 aa).

Residues 9-277 form the tr-type G domain; it reads DKRRTFAIIS…GIVEWAPKPL (269 aa). Residues 18–25, 86–90, and 140–143 contribute to the GTP site; these read SHPDAGKT, DTPGH, and NKLD.

This sequence belongs to the TRAFAC class translation factor GTPase superfamily. Classic translation factor GTPase family. PrfC subfamily.

The protein resides in the cytoplasm. In terms of biological role, increases the formation of ribosomal termination complexes and stimulates activities of RF-1 and RF-2. It binds guanine nucleotides and has strong preference for UGA stop codons. It may interact directly with the ribosome. The stimulation of RF-1 and RF-2 is significantly reduced by GTP and GDP, but not by GMP. The chain is Peptide chain release factor 3 from Shewanella sp. (strain ANA-3).